A 527-amino-acid polypeptide reads, in one-letter code: DUF21 domain-containing protein At1g47330 (527 aa).

Residues 1–15 (MSSDIPCCGTTFSLY) lie on the Extracellular side of the membrane. The CNNM transmembrane domain maps to 8-191 (CGTTFSLYVV…GKGGDLTTDE (184 aa)). Residues 16–36 (VVIIIALVAFAGLMAGLTLGL) traverse the membrane as a helical segment. Topologically, residues 37–70 (MSLGLVDLEVLIKSGRPQDRINAGKIFPVVKNQH) are cytoplasmic. Residues 71-91 (LLLCTLLIGNSMAMEALPIFL) traverse the membrane as a helical segment. Residues 92–93 (DK) lie on the Extracellular side of the membrane. A helical transmembrane segment spans residues 94-114 (IVPPWLAILLSVTLILVFGEI). The Cytoplasmic segment spans residues 115–126 (MPQAVCTRYGLK). The chain crosses the membrane as a helical span at residues 127-147 (VGAIMAPFVRVLLVLFFPISY). Over 148–527 (PISKVLDWML…PKHEESTQTL (380 aa)) the chain is Extracellular. 3 CBS domains span residues 210 to 271 (MTPI…EVPL), 274 to 334 (MSMR…TKDE), and 366 to 435 (KSEN…ILDE). 3 disordered regions span residues 307–335 (KDLD…KDEL), 358–384 (ETGD…LLAA), and 464–527 (ITQS…TQTL). S315 is modified (phosphoserine). The segment covering 358–369 (ETGDAKSGKSEN) has biased composition (basic and acidic residues). Over residues 464–501 (ITQSSSGSTSPNQTSHMATPDSSPTTKPSNSSPTRKPS) the composition is skewed to low complexity. A glycan (N-linked (GlcNAc...) asparagine) is linked at N475. Polar residues predominate over residues 502–515 (VSSPTREPSDSSHS). Basic and acidic residues predominate over residues 518 to 527 (PKHEESTQTL).

It is found in the membrane. The chain is DUF21 domain-containing protein At1g47330 (CBSDUF7) from Arabidopsis thaliana (Mouse-ear cress).